A 99-amino-acid chain; its full sequence is DNA-directed RNA polymerase subunit omega (99 aa).

The protein belongs to the RNA polymerase subunit omega family. The RNAP catalytic core consists of 2 alpha, 1 beta, 1 beta' and 1 omega subunit. When a sigma factor is associated with the core the holoenzyme is formed, which can initiate transcription.

The enzyme catalyses RNA(n) + a ribonucleoside 5'-triphosphate = RNA(n+1) + diphosphate. Promotes RNA polymerase assembly. Latches the N- and C-terminal regions of the beta' subunit thereby facilitating its interaction with the beta and alpha subunits. The polypeptide is DNA-directed RNA polymerase subunit omega (Xylella fastidiosa (strain Temecula1 / ATCC 700964)).